Reading from the N-terminus, the 584-residue chain is Proteasome-associated ATPase (584 aa).

Positions 16 to 91 form a coiled coil; the sequence is EELASQVRLL…KEEVDRLAQP (76 aa). Residue 273–278 participates in ATP binding; sequence GCGKTL. The interval 583–584 is docks into pockets in the proteasome alpha-ring; the sequence is YL.

Belongs to the AAA ATPase family. In terms of assembly, homohexamer. Assembles into a hexameric ring structure that caps the 20S proteasome core. Strongly interacts with the prokaryotic ubiquitin-like protein Pup through a hydrophobic interface; the interacting region of ARC lies in its N-terminal coiled-coil domain. There is one Pup binding site per ARC hexamer ring. Upon ATP-binding, the C-terminus of ARC interacts with the alpha-rings of the proteasome core, possibly by binding to the intersubunit pockets.

It participates in protein degradation; proteasomal Pup-dependent pathway. ATPase which is responsible for recognizing, binding, unfolding and translocation of pupylated proteins into the bacterial 20S proteasome core particle. May be essential for opening the gate of the 20S proteasome via an interaction with its C-terminus, thereby allowing substrate entry and access to the site of proteolysis. Thus, the C-termini of the proteasomal ATPase may function like a 'key in a lock' to induce gate opening and therefore regulate proteolysis. The protein is Proteasome-associated ATPase of Nocardioides sp. (strain ATCC BAA-499 / JS614).